The primary structure comprises 958 residues: Glycine dehydrogenase (decarboxylating) (958 aa).

K703 is modified (N6-(pyridoxal phosphate)lysine).

This sequence belongs to the GcvP family. As to quaternary structure, the glycine cleavage system is composed of four proteins: P, T, L and H. Pyridoxal 5'-phosphate serves as cofactor.

It carries out the reaction N(6)-[(R)-lipoyl]-L-lysyl-[glycine-cleavage complex H protein] + glycine + H(+) = N(6)-[(R)-S(8)-aminomethyldihydrolipoyl]-L-lysyl-[glycine-cleavage complex H protein] + CO2. Functionally, the glycine cleavage system catalyzes the degradation of glycine. The P protein binds the alpha-amino group of glycine through its pyridoxal phosphate cofactor; CO(2) is released and the remaining methylamine moiety is then transferred to the lipoamide cofactor of the H protein. In Nitrobacter hamburgensis (strain DSM 10229 / NCIMB 13809 / X14), this protein is Glycine dehydrogenase (decarboxylating).